The primary structure comprises 84 residues: Exodeoxyribonuclease 7 small subunit (84 aa).

Belongs to the XseB family. As to quaternary structure, heterooligomer composed of large and small subunits.

The protein resides in the cytoplasm. The enzyme catalyses Exonucleolytic cleavage in either 5'- to 3'- or 3'- to 5'-direction to yield nucleoside 5'-phosphates.. Its function is as follows. Bidirectionally degrades single-stranded DNA into large acid-insoluble oligonucleotides, which are then degraded further into small acid-soluble oligonucleotides. The protein is Exodeoxyribonuclease 7 small subunit of Caulobacter vibrioides (strain ATCC 19089 / CIP 103742 / CB 15) (Caulobacter crescentus).